A 544-amino-acid polypeptide reads, in one-letter code: Chaperonin GroEL (544 aa).

Residues 29 to 32 (TLGP), lysine 50, 86 to 90 (DGTTT), glycine 414, 477 to 479 (DAA), and aspartate 493 each bind ATP.

Belongs to the chaperonin (HSP60) family. As to quaternary structure, forms a cylinder of 14 subunits composed of two heptameric rings stacked back-to-back. Interacts with the co-chaperonin GroES.

Its subcellular location is the cytoplasm. It carries out the reaction ATP + H2O + a folded polypeptide = ADP + phosphate + an unfolded polypeptide.. Its function is as follows. Together with its co-chaperonin GroES, plays an essential role in assisting protein folding. The GroEL-GroES system forms a nano-cage that allows encapsulation of the non-native substrate proteins and provides a physical environment optimized to promote and accelerate protein folding. This Hydrogenovibrio crunogenus (strain DSM 25203 / XCL-2) (Thiomicrospira crunogena) protein is Chaperonin GroEL.